Reading from the N-terminus, the 148-residue chain is UPF0179 protein UNCMA_27840 (148 aa).

The protein belongs to the UPF0179 family.

The sequence is that of UPF0179 protein UNCMA_27840 from Methanocella arvoryzae (strain DSM 22066 / NBRC 105507 / MRE50).